Reading from the N-terminus, the 767-residue chain is Photosystem I P700 chlorophyll a apoprotein A1 (767 aa).

Helical transmembrane passes span I72–A95, L158–H181, L197–L221, I305–Y323, W364–Y387, I403–I429, A451–H473, and F548–L566. [4Fe-4S] cluster is bound by residues C590 and C599. The next 2 helical transmembrane spans lie at H606–W627 and T681–F703. H692 contributes to the chlorophyll a' binding site. Chlorophyll a is bound by residues M700 and Y708. W709 serves as a coordination point for phylloquinone. Residues A741–A761 form a helical membrane-spanning segment.

It belongs to the PsaA/PsaB family. The PsaA/B heterodimer binds the P700 chlorophyll special pair and subsequent electron acceptors. PSI consists of a core antenna complex that captures photons, and an electron transfer chain that converts photonic excitation into a charge separation. The cyanobacterial PSI reaction center is composed of one copy each of PsaA,B,C,D,E,F,I,J,K,L,M and X, and forms trimeric complexes. PSI electron transfer chain: 5 chlorophyll a, 1 chlorophyll a', 2 phylloquinones and 3 4Fe-4S clusters. PSI core antenna: 90 chlorophyll a, 22 carotenoids, 3 phospholipids and 1 galactolipid. P700 is a chlorophyll a/chlorophyll a' dimer, A0 is one or more chlorophyll a, A1 is one or both phylloquinones and FX is a shared 4Fe-4S iron-sulfur center. is required as a cofactor.

It is found in the cellular thylakoid membrane. The catalysed reaction is reduced [plastocyanin] + hnu + oxidized [2Fe-2S]-[ferredoxin] = oxidized [plastocyanin] + reduced [2Fe-2S]-[ferredoxin]. Its function is as follows. PsaA and PsaB bind P700, the primary electron donor of photosystem I (PSI), as well as the electron acceptors A0, A1 and FX. PSI is a plastocyanin/cytochrome c6-ferredoxin oxidoreductase, converting photonic excitation into a charge separation, which transfers an electron from the donor P700 chlorophyll pair to the spectroscopically characterized acceptors A0, A1, FX, FA and FB in turn. Oxidized P700 is reduced on the lumenal side of the thylakoid membrane by plastocyanin or cytochrome c6. The chain is Photosystem I P700 chlorophyll a apoprotein A1 from Synechococcus sp. (strain WH7803).